Consider the following 529-residue polypeptide: Peptide chain release factor 3 (529 aa).

Residues 7 to 275 (EQRRTFGIIS…AVVELAPSPR (269 aa)) enclose the tr-type G domain. Residues 16–23 (SHPDAGKT), 84–88 (DTPGH), and 138–141 (NKLD) contribute to the GTP site.

It belongs to the TRAFAC class translation factor GTPase superfamily. Classic translation factor GTPase family. PrfC subfamily.

It localises to the cytoplasm. Increases the formation of ribosomal termination complexes and stimulates activities of RF-1 and RF-2. It binds guanine nucleotides and has strong preference for UGA stop codons. It may interact directly with the ribosome. The stimulation of RF-1 and RF-2 is significantly reduced by GTP and GDP, but not by GMP. The polypeptide is Peptide chain release factor 3 (Syntrophus aciditrophicus (strain SB)).